The chain runs to 430 residues: Adenylosuccinate synthetase (430 aa).

GTP-binding positions include 12-18 (GDEGKGK) and 40-42 (GHT). The Proton acceptor role is filled by aspartate 13. Mg(2+) is bound by residues aspartate 13 and glycine 40. Residues 13–16 (DEGK), 38–41 (NAGH), threonine 130, arginine 144, glutamine 224, threonine 239, and arginine 303 each bind IMP. Histidine 41 (proton donor) is an active-site residue. 299 to 305 (TNTGRPR) serves as a coordination point for substrate. GTP is bound by residues arginine 305, 331-333 (KLD), and 413-415 (STS).

Belongs to the adenylosuccinate synthetase family. In terms of assembly, homodimer. It depends on Mg(2+) as a cofactor.

The protein resides in the cytoplasm. The enzyme catalyses IMP + L-aspartate + GTP = N(6)-(1,2-dicarboxyethyl)-AMP + GDP + phosphate + 2 H(+). Its pathway is purine metabolism; AMP biosynthesis via de novo pathway; AMP from IMP: step 1/2. Plays an important role in the de novo pathway of purine nucleotide biosynthesis. Catalyzes the first committed step in the biosynthesis of AMP from IMP. The chain is Adenylosuccinate synthetase from Rhodopseudomonas palustris (strain HaA2).